Consider the following 69-residue polypeptide: Putative membrane protein insertion efficiency factor (69 aa).

This sequence belongs to the UPF0161 family.

It localises to the cell inner membrane. Functionally, could be involved in insertion of integral membrane proteins into the membrane. This Chromobacterium violaceum (strain ATCC 12472 / DSM 30191 / JCM 1249 / CCUG 213 / NBRC 12614 / NCIMB 9131 / NCTC 9757 / MK) protein is Putative membrane protein insertion efficiency factor.